Here is a 361-residue protein sequence, read N- to C-terminus: Glyceraldehyde-3-phosphate dehydrogenase, glycosomal (361 aa).

NAD(+) contacts are provided by residues 13–14 (RI), aspartate 39, and arginine 93. D-glyceraldehyde 3-phosphate is bound by residues 166–168 (SCT), threonine 198, 227–228 (TG), and arginine 250. Catalysis depends on cysteine 167, which acts as the Nucleophile. Asparagine 336 contributes to the NAD(+) binding site. The Microbody targeting signal motif lies at 359–361 (SKL).

The protein belongs to the glyceraldehyde-3-phosphate dehydrogenase family. As to quaternary structure, homotetramer.

Its subcellular location is the glycosome. It catalyses the reaction D-glyceraldehyde 3-phosphate + phosphate + NAD(+) = (2R)-3-phospho-glyceroyl phosphate + NADH + H(+). The protein operates within carbohydrate degradation; glycolysis; pyruvate from D-glyceraldehyde 3-phosphate: step 1/5. The chain is Glyceraldehyde-3-phosphate dehydrogenase, glycosomal (GAPDG) from Crithidia fasciculata.